A 129-amino-acid polypeptide reads, in one-letter code: Gas vesicle protein C (129 aa).

Repeats lie at residues 19 to 51 (VTQLFRETHEFLSATTAHRQEQAKQQAQQLHQF), 52 to 84 (HQNLEQTTHEFLTETTTQRVAQAEAQANFLHKF), and 85 to 117 (HQNLEQTTQEFLAETAKNRTEQAKAQSQYLQQF). Residues 19-117 (VTQLFRETHE…KAQSQYLQQF (99 aa)) are 3 X 33 AA tandem repeats.

The protein belongs to the gas vesicle GvpC family.

The protein resides in the gas vesicle. Its function is as follows. Confers stability, involved in shaping gas vesicles, hollow, gas filled proteinaceous nanostructures. During planktonic growth they allow positioning of the organism at a favorable depth for light or nutrient acquisition. Cluster expression in E.coli (gvpA1-gvpA2-gvpC-gvpN-gvpJ-gvpK-gvpF-gvpG-gvpV-gvpW) allows cells to float and produces irregularly shaped gas vesicles. This is Gas vesicle protein C from Nostoc sp. (strain PCC 7120 / SAG 25.82 / UTEX 2576).